We begin with the raw amino-acid sequence, 313 residues long: tRNA dimethylallyltransferase (313 aa).

ATP is bound at residue Gly17–Thr24. Thr19–Thr24 lines the substrate pocket. 3 interaction with substrate tRNA regions span residues Asp42–Leu45, Gln166–Arg170, and Arg247–Arg252.

The protein belongs to the IPP transferase family. As to quaternary structure, monomer. Mg(2+) is required as a cofactor.

The enzyme catalyses adenosine(37) in tRNA + dimethylallyl diphosphate = N(6)-dimethylallyladenosine(37) in tRNA + diphosphate. Functionally, catalyzes the transfer of a dimethylallyl group onto the adenine at position 37 in tRNAs that read codons beginning with uridine, leading to the formation of N6-(dimethylallyl)adenosine (i(6)A). This chain is tRNA dimethylallyltransferase, found in Serratia proteamaculans (strain 568).